We begin with the raw amino-acid sequence, 432 residues long: Glutamyl-tRNA reductase (432 aa).

Residues 49 to 52 (TCNR), S109, 114 to 116 (EGQ), and Q120 each bind substrate. C50 functions as the Nucleophile in the catalytic mechanism. 198–203 (GAGRMS) contacts NADP(+).

It belongs to the glutamyl-tRNA reductase family. Homodimer.

The enzyme catalyses (S)-4-amino-5-oxopentanoate + tRNA(Glu) + NADP(+) = L-glutamyl-tRNA(Glu) + NADPH + H(+). The protein operates within porphyrin-containing compound metabolism; protoporphyrin-IX biosynthesis; 5-aminolevulinate from L-glutamyl-tRNA(Glu): step 1/2. It functions in the pathway porphyrin-containing compound metabolism; chlorophyll biosynthesis. Its function is as follows. Catalyzes the NADPH-dependent reduction of glutamyl-tRNA(Glu) to glutamate 1-semialdehyde (GSA). This Synechococcus sp. (strain CC9902) protein is Glutamyl-tRNA reductase.